The chain runs to 211 residues: Protein-L-isoaspartate O-methyltransferase (211 aa).

Residue Ser60 is part of the active site.

It belongs to the methyltransferase superfamily. L-isoaspartyl/D-aspartyl protein methyltransferase family.

The protein localises to the cytoplasm. The enzyme catalyses [protein]-L-isoaspartate + S-adenosyl-L-methionine = [protein]-L-isoaspartate alpha-methyl ester + S-adenosyl-L-homocysteine. Catalyzes the methyl esterification of L-isoaspartyl residues in peptides and proteins that result from spontaneous decomposition of normal L-aspartyl and L-asparaginyl residues. It plays a role in the repair and/or degradation of damaged proteins. This is Protein-L-isoaspartate O-methyltransferase from Pseudomonas fluorescens (strain ATCC BAA-477 / NRRL B-23932 / Pf-5).